Reading from the N-terminus, the 186-residue chain is ADP-ribosylation factor-like protein 8A (186 aa).

The note=Mediates targeting to membranes intramembrane region spans 1–19 (MLALFNKLLDWFKALFWKE). GTP-binding positions include 29-35 (QYSGKTT), 71-75 (DIGGQ), and 130-133 (NKRD).

Belongs to the small GTPase superfamily. Arf family.

The protein localises to the late endosome membrane. It localises to the lysosome membrane. May play a role in lysosomes motility. Alternatively, may play a role in chromosome segregation. In Xenopus tropicalis (Western clawed frog), this protein is ADP-ribosylation factor-like protein 8A (arl8a).